The primary structure comprises 561 residues: DNA ligase (561 aa).

Glutamate 247 is a binding site for ATP. Residue lysine 249 is the N6-AMP-lysine intermediate of the active site. Residues arginine 254, arginine 269, glutamate 299, phenylalanine 339, arginine 414, and lysine 420 each coordinate ATP.

It belongs to the ATP-dependent DNA ligase family. Monomer. It depends on Mg(2+) as a cofactor.

It carries out the reaction ATP + (deoxyribonucleotide)n-3'-hydroxyl + 5'-phospho-(deoxyribonucleotide)m = (deoxyribonucleotide)n+m + AMP + diphosphate.. Its function is as follows. DNA ligase that seals nicks in double-stranded DNA during DNA replication, DNA recombination and DNA repair. The chain is DNA ligase from Pyrococcus furiosus (strain ATCC 43587 / DSM 3638 / JCM 8422 / Vc1).